The following is a 150-amino-acid chain: Translation machinery-associated protein 17 (150 aa).

Phosphoserine occurs at positions 24 and 68. The segment at 110–139 is disordered; sequence RKTGHGKSKHEVEAKDNTNKGPDVDMDNSN. Basic and acidic residues predominate over residues 118–127; sequence KHEVEAKDNT.

In terms of assembly, interacts with RPT6. Interacts with the 40S and 60S ribosomal subunits.

It localises to the cytoplasm. The protein localises to the nucleus. Its function is as follows. ATPase-dedicated chaperone that assists the formation of the RPT6-RPT3 ATPase pair, an early step in proteasome assembly. Plays a key role in maintaining homeostatic proteasome levels and adjusting proteasome assembly when demands increase, such as during proteasome stresses. Function overlaps with RPN14. This Saccharomyces cerevisiae (strain ATCC 204508 / S288c) (Baker's yeast) protein is Translation machinery-associated protein 17 (TMA17).